A 2329-amino-acid polypeptide reads, in one-letter code: MNTTDCFVALIHIFREIKALFLSRTQGKMEFTLHNGEKKTFYSRPNNHDNCWLNTILQLFRYVDEPFFDWVYDSPENLTLEAIKQLEEVTGLELHEGGPPALVIWNIKHLLHTGVGTASRPSEVCMVDGTDMCLADSHAGIFLKGQEHAVFACVTSNGWYAIDDEDFYPWTPDPSDVLVFVPYDQEPLNGEWKAKVQKRLKGAGQSSPATGSQNQSGNTGSIINNYYMQQYQNSMDTQLGDNAISGGSNEGSTDTTSTHTNNTQNNDWFSRLASSAFSGLFGALLADKKTEETTLLEDRILTTRNGHTTSTTQSSVGVTYGYAVAEDAVSGPNTSGLETRVTQAERFFKKHLFDWTPDLSFGHCHYLELPSEHKGVFGSLMSSYAYMRNGWDIEVTAVGNQFNGGCLLVALVPELKELDTRQKYQLTLFPHQFINPRTNMTAHINVPYVGVNRYDQYELHKPWTLVVMVVAPLTVKTGGSEQIKVYMNAAPTYVHVAGELPSKEGIVPVACVDGYGNMVTTDPKTADPVYGKVSNPPRTSFPGRFTNFLDVAEACPTFLRFGEVPFVKTVNSGDRLLAKFDVSLAAGHMSNTYLAGLAQYYTQYSGTMNIHFMFTGPTDAKARYMVAYIPPGMTPPTDPERAAHCIHSEWDTGLNSKFTFSIPYLSAADYAYTASDVAETTSVQGWVCIYQITHGKAEGDALVVSVSAGKDFEFRLPVDARQQTTTTGESADPVTTTVENYGGETQTARRLHTDVAFVLDRFVKLTQPKSTQTLDLMQIPSHTLVGALLRSATYYFSDLEVALVHTGPVTWVPNGAPKTALNNHTNPTAYQKQPITRLALPYTAPHRVLSTVYNGKTTYGEESSRRGDLAALARRVNNRLPTSFNYGAVKADTITELLIRMKRAETYCPRPLLALDTTQDRRKQKIIAPEKQTLNFDLLKLAGDVESNPGPFFFSDVRSNFTKLVDTINQMQEDMSTKHGPDFNRLVSAFEELATGVKAIRTGLDEAKPWYKLIKLLSRLSCMAAVAARSKDPVLVAIMLADTGLEILDSTFVVKKISDSLSSLFHVPAPVFSFGAPVLLAGLVKVASSFFRSTPEEPERAEKQLKARDINDIFAILKNGEWLVKLILAIRDWIKAWIAPEEKFVTMTDLVPGILEKQPDLNGPSKYKEAKEWLDNARQACLKSGNVHIANLCKVVAPAPSKSRPEPVVVCLRGKSGQGKSFLADVLAQAISTHYTGRIDSVWYCPPDLDHFDGYNQQTVVVMDDLGQNPDGKDFKYFAQMVSTTGFIPPMASLEDKGKPFNSKVIIATTNLYSGFTPRTMVCPDALNRRFHFDIDVSAKDGYKINNKLDIIKALEDTHTNPVAMFQYDCALLNGMAVEMKRMQQDMFKPQPPLQNVYQLVQEVIDRVELHEKVSSHPIFKQISIPSQKSVLYFLIEKGQHEAAIEFFEGMVHDSIKEELRPLIQQTSFVKRAFKRLKENFEIVALCLTLLANIVIMIRETRKRQQMVNDAVNEYIDKANITTDDKTLDEAEKNPLETSGASTVGFRERTLPGRKTSDDVNSEPVKSVEEQPQAEGPYAGAFERQKTLKVRAKLPQQEGPYAGPMERQKPLKVKAKAPVVKEGPYEGPVKKPVALKVKAKNLIVTESGAPPTDLQKMVMGNTKPVELILDGKTVAICCATGVFGTAYLVPRHLFAEKYDKIMLDGRAMTDSDYRVFEFEIKVKGQNMLSDAALMVLHRGNRVRDITKHFRDVAKMKKGTPVVGVINNADVGRLIFSGEALTYKDIVVCMDGDTMPGLFAYKAVTRAGYCGGAVLAKDGAETFIVGTHSAGGNGVGYCSCVSRSMLLKMKAHIDPEPHHEGLIVDTRDVEERVHVMRKTKLAPTVAHGVFNPEFGPAALSNKDPRLNEGVVLDEVIFSKHKGDTKMSEEDKALFRRCAADYASRLHSVLGTANAPLSIYEAIKGVDGLDAMEPDTAPGLPWALQGKRRGALIDFENGTVGPEVEAALKLMEKREYKFACQTFLKDEIRPMEKVRAGKTRIVDVLPVEHILYTRMMIGRFCAQMHSNNGPQIGSAVGCNPDVDWQRFGTHFAQYRNVWDVDYSAFDANHCSDAMNIMFEEVFRTEFGFHPNAEWILKTLVNTEHAYENKRIVVEGGMPSGCSATSIINTILNNIYVLYALRRHYEGVELDTYTMISYGDDIVVASDYDLDFEALKPHFKSLGQTITPADKSDKGFVLGHSITDVTFLKRHFHMDYGTGFYKPVMASKTLEAILSFARRGTIQEKLISVAGLAVHSGPDEYRRLFEPFQGLFEIPSYRSLYLRWVNAVCGDA.

One can recognise a Peptidase C28 domain in the interval 29-182; that stretch reads MEFTLHNGEK…DPSDVLVFVP (154 aa). Residues Cys51, His148, and Asp163 each act as for leader protease activity in the active site. Disordered regions lie at residues 197 to 218 and 238 to 264; these read QKRL…QSGN and QLGD…NNTQ. Residue Gly202 is the site of N-myristoyl glycine; by host attachment. 2 stretches are compositionally biased toward polar residues: residues 204-218 and 238-251; these read GQSS…QSGN and QLGD…SNEG. Residues 252 to 264 are compositionally biased toward low complexity; the sequence is STDTTSTHTNNTQ. The antigenic epitope stretch occupies residues 787 to 795; the sequence is ALLRSATYY. The short motif at 866-868 is the Cell attachment site element; sequence RGD. Residues 1186 to 1350 enclose the SF3 helicase domain; it reads NVHIANLCKV…DGYKINNKLD (165 aa). Position 1214 to 1221 (1214 to 1221) interacts with ATP; sequence GKSGQGKS. An intramembrane segment occupies 1478-1498; that stretch reads KENFEIVALCLTLLANIVIMI. Composition is skewed to basic and acidic residues over residues 1526 to 1535 and 1546 to 1558; these read KTLDEAEKNP and FRER…KTSD. Residues 1526-1577 are disordered; that stretch reads KTLDEAEKNPLETSGASTVGFRERTLPGRKTSDDVNSEPVKSVEEQPQAEGP. Tyr1578, Tyr1601, and Tyr1625 each carry O-(5'-phospho-RNA)-tyrosine. One can recognise a Peptidase C3 domain in the interval 1649–1845; the sequence is APPTDLQKMV…YCSCVSRSML (197 aa). His1692 functions as the For protease 3C activity; Proton donor/acceptor in the catalytic mechanism. Residues Asp1730 and Cys1809 each act as for protease 3C activity in the active site. 2 consecutive short sequence motifs (nuclear localization signal) follow at residues 1875-1883 and 1876-1883; these read MRKTKLAPT and RKTKLAPT. The 119-residue stretch at 2093–2211 folds into the RdRp catalytic domain; it reads RNVWDVDYSA…ASDYDLDFEA (119 aa). Catalysis depends on Asp2197, which acts as the For RdRp activity.

This sequence belongs to the picornaviruses polyprotein family. In terms of assembly, interacts with host ISG15. Interacts (via R-G-D motif) with host ITGAV/ITGB6. Interacts with host MAVS; this interaction inhibits binding of host TRAF3 to MAVS, thereby suppressing interferon-mediated responses. As to quaternary structure, forms homooligomers. In terms of assembly, homohexamer. Interacts with host VIM. Interacts with host BECN1. Interacts with host DCTN3. As to quaternary structure, interacts with RNA-dependent RNA polymerase; this interaction allows 3B-1 to binds 2 polymerases and act as a primer. It also allows the recruitment of the RNA-dependent RNA polymerase to host membranes. In terms of assembly, interacts with RNA-dependent RNA polymerase; this interaction allows 3B-2 to act as a primer. Interacts with RNA-dependent RNA polymerase; this interaction allows 3B-3 to act as a primer. As to quaternary structure, interacts with 3B-1; this interaction allows 3B-1 to binds 2 polymerases and act as a primer. It also allows the recruitment of the RNA-dependent RNA polymerase to host membranes. Interacts with 3B-2; this interaction allows 3B-2 to act as a primer. Interacts with 3B-3; this interaction allows 3B-3 to act as a primer. In terms of processing, specific enzymatic cleavages in vivo by the viral proteases yield a variety of precursors and mature proteins. The polyprotein seems to be cotranslationally cleaved at the 2A/2B junction by a ribosomal skip from one codon to the next without formation of a peptide bond. This process would release the L-P1-2A peptide from the translational complex. During virion maturation, immature virions are rendered infectious following cleavage of VP0 into VP4 and VP2. This maturation seems to be an autocatalytic event triggered by the presence of RNA in the capsid and is followed by a conformational change of the particle. Post-translationally, myristoylation is required during RNA encapsidation and formation of the mature virus particle. In terms of processing, uridylylated by the polymerase and covalently linked to the 5'-end of genomic RNA. These uridylylated forms act as a nucleotide-peptide primer for the polymerase.

The protein resides in the host nucleus. The protein localises to the host cytoplasm. Its subcellular location is the virion. It localises to the host endoplasmic reticulum membrane. It is found in the host cytoplasmic vesicle membrane. It catalyses the reaction Autocatalytically cleaves itself from the polyprotein of the foot-and-mouth disease virus by hydrolysis of a Lys-|-Gly bond, but then cleaves host cell initiation factor eIF-4G at bonds -Gly-|-Arg- and -Lys-|-Arg-.. The catalysed reaction is a ribonucleoside 5'-triphosphate + H2O = a ribonucleoside 5'-diphosphate + phosphate + H(+). The enzyme catalyses RNA(n) + a ribonucleoside 5'-triphosphate = RNA(n+1) + diphosphate. It carries out the reaction Selective cleavage of Gln-|-Gly bond in the poliovirus polyprotein. In other picornavirus reactions Glu may be substituted for Gln, and Ser or Thr for Gly.. Its function is as follows. Autocatalytically cleaves itself from the polyprotein at the L/VP0 junction. Also cleaves the host translation initiation factors EIF4G1 and EIF4G3, in order to shut off the capped cellular mRNA transcription. Plays a role in counteracting host innate antiviral response using diverse mechanisms. Possesses a deubiquitinase activity acting on both 'Lys-48' and 'Lys-63'-linked polyubiquitin chains. In turn, inhibits the ubiquitination and subsequent activation of key signaling molecules of type I IFN response such as host RIGI, TBK1, TRAF3 and TRAF6. Inhibits host NF-kappa-B activity by inducing a decrease in RELA mRNA levels. Cleaves a peptide bond in the C-terminus of host ISG15, resulting in the damaging of this modifier that can no longer be attached to target proteins. Also cleaves host G3BP1 and G3BP2 in order to inhibit cytoplasmic stress granules assembly. Lies on the inner surface of the capsid shell. After binding to the host receptor, the capsid undergoes conformational changes. Capsid protein VP4 is released, capsid protein VP1 N-terminus is externalized, and together, they shape a pore in the host membrane through which the viral genome is translocated into the host cell cytoplasm. After genome has been released, the channel shrinks. Functionally, forms an icosahedral capsid of pseudo T=3 symmetry with capsid proteins VP1 and VP3. The capsid is composed of 60 copies of each capsid protein organized in the form of twelve pentamers and encloses the viral positive strand RNA genome. Upon acidifcation in the endosome, dissociates into pentamers. In terms of biological role, forms an icosahedral capsid of pseudo T=3 symmetry with capsid proteins VP0 and VP3. The capsid is composed of 60 copies of each capsid protein organized in the form of twelve pentamers and encloses the viral positive strand RNA genome. Upon acidifcation in the endosome, dissociates into pentamers. Its function is as follows. Forms an icosahedral capsid of pseudo T=3 symmetry with capsid proteins VP2 and VP3. The capsid is composed of 60 copies of each capsid protein organized in the form of twelve pentamers and encloses the viral positive strand RNA genome. Mediates cell entry by attachment to an integrin receptor, usually host ITGAV/ITGB6. In addition, targets host MAVS to suppress type I IFN pathway. Upon acidifcation in the endosome, dissociates into pentamers. Mediates self-processing of the polyprotein by a translational effect termed 'ribosome skipping'. Mechanistically, 2A-mediated cleavage occurs between the C-terminal glycine and the proline of the downstream protein 2B. In the case of foot-and-mouth disease virus, the 2A oligopeptide is post-translationally 'trimmed' from the C-terminus of the upstream protein 1D by 3C proteinase. Functionally, plays an essential role in the virus replication cycle by acting as a viroporin. Creates a pore in the host endoplasmic reticulum and as a consequence releases Ca2+ in the cytoplasm of infected cell. In turn, high levels of cytoplasmic calcium may trigger membrane trafficking and transport of viral ER-associated proteins to viroplasms, sites of viral genome replication. In terms of biological role, associates with and induces structural rearrangements of intracellular membranes. Triggers host autophagy by interacting with host BECN1 and thereby promotes viral replication. Participates in viral replication and interacts with host DHX9. Displays RNA-binding, nucleotide binding and NTPase activities. May play a role in virion morphogenesis and viral RNA encapsidation by interacting with the capsid protein VP3. Its function is as follows. Plays important roles in virus replication, virulence and host range. Cooperates with host DDX56 to inhibit IRF3 nuclear translocation and subsequent type I interferon production. Covalently linked to the 5'-end of both the positive-strand and negative-strand genomic RNAs. Acts as a genome-linked replication primer. Functionally, cysteine protease that generates mature viral proteins from the precursor polyprotein. In addition to its proteolytic activity, binds to viral RNA and thus influences viral genome replication. RNA and substrate bind cooperatively to the protease. In terms of biological role, RNA-directed RNA polymerase 3D-POL replicates genomic and antigenomic RNA by recognizing replications specific signals. Covalently attaches UMP to a tyrosine of VPg, which is used to prime RNA synthesis. The positive stranded RNA genome is first replicated at virus induced membranous vesicles, creating a dsRNA genomic replication form. This dsRNA is then used as template to synthesize positive stranded RNA genomes. ss(+)RNA genomes are either translated, replicated or encapsidated. The polypeptide is Genome polyprotein (Foot-and-mouth disease virus serotype Asia-1 (FMDV)).